The chain runs to 994 residues: Translocase of chloroplast 108, chloroplastic (994 aa).

3 disordered regions span residues 14–61, 84–124, and 152–287; these read KEAS…EDEP, TTDL…DPSV, and AVDG…DETR. 2 stretches are compositionally biased toward polar residues: residues 37 to 53 and 84 to 98; these read GETT…ANES and TTDL…TPSN. Residues 99 to 121 show a composition bias toward basic and acidic residues; the sequence is AEKESPEATEVRIVEEGKLEKAD. Positions 166 to 197 are enriched in acidic residues; that stretch reads NDGDTDANTADEDNENDEDDVDEDEDEDDADM. The span at 249–268 shows a compositional bias: polar residues; the sequence is ASDSPGRNTQRPNGALSTQI. The segment covering 269-280 has biased composition (low complexity); it reads TSTTDESASSDA. The region spanning 360–589 is the AIG1-type G domain; the sequence is DFACTILVLG…KLQETTAPGR (230 aa). The G1 stretch occupies residues 369–376; that stretch reads GKTGVGKS. 372 to 377 contacts GTP; that stretch reads GVGKSS. Ser-376 contacts Mg(2+). The tract at residues 395–399 is G2; sequence PSTNK. The tract at residues 416–419 is G3; it reads DTPG. Residues 488–491 form a G4 region; the sequence is THAS. GTP contacts are provided by residues His-489 and 537-538; that span reads EN. The tract at residues 537–539 is G5; that stretch reads ENH. 2 disordered regions span residues 616 to 659 and 691 to 716; these read LPDE…EDLT and EAKK…EAGN. A compositionally biased stretch (acidic residues) spans 620–643; sequence QAGESDESDDDEEEEDSDADDYDE. Positions 650–659 are enriched in basic and acidic residues; that stretch reads LSKEELEDLT. The span at 705–714 shows a compositional bias: acidic residues; sequence AEAEEAEDEA. A helical membrane pass occupies residues 969-989; the sequence is MVLIGIVPILRSLINCRFGFG.

It belongs to the TRAFAC class TrmE-Era-EngA-EngB-Septin-like GTPase superfamily. AIG1/Toc34/Toc159-like paraseptin GTPase family. TOC159 subfamily. Part of the TOC core complex. Mg(2+) is required as a cofactor.

It is found in the plastid. It localises to the chloroplast outer membrane. GTPase involved in protein precursor import into chloroplasts. Seems to recognize chloroplast-destined precursor proteins and regulate their presentation to the translocation channel through GTP hydrolysis. Probably specialized in the import of nuclear encoded non-photosynthetic preproteins from the cytoplasm to the chloroplast. This is Translocase of chloroplast 108, chloroplastic from Physcomitrium patens (Spreading-leaved earth moss).